Reading from the N-terminus, the 322-residue chain is HPr kinase/phosphorylase (322 aa).

Residues histidine 146 and lysine 167 contribute to the active site. 161–168 (GDSGLGKS) is a binding site for ATP. Serine 168 contributes to the Mg(2+) binding site. Aspartate 185 (proton acceptor; for phosphorylation activity. Proton donor; for dephosphorylation activity) is an active-site residue. An important for the catalytic mechanism of both phosphorylation and dephosphorylation region spans residues 209–218 (LEVRGLGLLD). Glutamate 210 contacts Mg(2+). Residue arginine 250 is part of the active site. The important for the catalytic mechanism of dephosphorylation stretch occupies residues 271 to 276 (QVAAGR).

It belongs to the HPrK/P family. Homohexamer. Requires Mg(2+) as cofactor.

It carries out the reaction [HPr protein]-L-serine + ATP = [HPr protein]-O-phospho-L-serine + ADP + H(+). It catalyses the reaction [HPr protein]-O-phospho-L-serine + phosphate + H(+) = [HPr protein]-L-serine + diphosphate. Its function is as follows. Catalyzes the ATP- as well as the pyrophosphate-dependent phosphorylation of a specific serine residue in HPr, a phosphocarrier protein of the phosphoenolpyruvate-dependent sugar phosphotransferase system (PTS). HprK/P also catalyzes the pyrophosphate-producing, inorganic phosphate-dependent dephosphorylation (phosphorolysis) of seryl-phosphorylated HPr (P-Ser-HPr). This is HPr kinase/phosphorylase from Paraburkholderia xenovorans (strain LB400).